A 239-amino-acid chain; its full sequence is tRNA (guanine-N(1)-)-methyltransferase (239 aa).

S-adenosyl-L-methionine contacts are provided by residues G113 and 133 to 138 (IGDYVL). Positions 218 to 239 (ERRPDLWAARATQNPPERKTNG) are disordered.

It belongs to the RNA methyltransferase TrmD family. In terms of assembly, homodimer.

It is found in the cytoplasm. It catalyses the reaction guanosine(37) in tRNA + S-adenosyl-L-methionine = N(1)-methylguanosine(37) in tRNA + S-adenosyl-L-homocysteine + H(+). Specifically methylates guanosine-37 in various tRNAs. The protein is tRNA (guanine-N(1)-)-methyltransferase of Nitrobacter winogradskyi (strain ATCC 25391 / DSM 10237 / CIP 104748 / NCIMB 11846 / Nb-255).